The following is a 392-amino-acid chain: ATP phosphoribosyltransferase regulatory subunit (392 aa).

This sequence belongs to the class-II aminoacyl-tRNA synthetase family. HisZ subfamily. Heteromultimer composed of HisG and HisZ subunits.

It localises to the cytoplasm. Its pathway is amino-acid biosynthesis; L-histidine biosynthesis; L-histidine from 5-phospho-alpha-D-ribose 1-diphosphate: step 1/9. Functionally, required for the first step of histidine biosynthesis. May allow the feedback regulation of ATP phosphoribosyltransferase activity by histidine. The polypeptide is ATP phosphoribosyltransferase regulatory subunit (Gloeobacter violaceus (strain ATCC 29082 / PCC 7421)).